Reading from the N-terminus, the 628-residue chain is DNA mismatch repair protein MutL (628 aa).

The interval 335 to 411 (SVDIEPESEQ…ASRNSEVSLP (77 aa)) is disordered. Polar residues predominate over residues 343–353 (EQTTAWQTSPT).

Belongs to the DNA mismatch repair MutL/HexB family.

Its function is as follows. This protein is involved in the repair of mismatches in DNA. It is required for dam-dependent methyl-directed DNA mismatch repair. May act as a 'molecular matchmaker', a protein that promotes the formation of a stable complex between two or more DNA-binding proteins in an ATP-dependent manner without itself being part of a final effector complex. In Shewanella pealeana (strain ATCC 700345 / ANG-SQ1), this protein is DNA mismatch repair protein MutL.